Consider the following 474-residue polypeptide: MKLKLIVNGCEAPDDYKLLRTTINTVASLRKTAILRFNSERLTIISTPKSSLNSSNNGTILRGDTGQLWCTIPHDVFRLYTVISARELNTITMECNCDSLLSVFKRYDRVMNQGSSSNMTIKLQSMPEWNTNNGTLSGGTAGGVDTTSKPNPICALGITFEEIVHTSGPNDAIVMNGGVDEHNGLPTTVGTGNLLASNKVIMHSFKVPVKLLFRAQDTRIQEPMINYIQLMMYKLPPISGEFGSAFHGFIRRVERYSNVNHIHLMGVKKKEHGNEGDDVELKIIVNELDWHLEICWNGPLDSVIQRQEGLTDNPSQNQHIDTDGRQEEGSLPIIEADKPMSSLYTNTRDREMEENIRYDEDLLRIEDSSIADTRGNIYTADTSGDTEFNDISVMVEKAEQESSSTHEVIIRCKDWKVCSKLYAAFEEVVLAISHDESCVFHCSLDRGSLEDSEDVEKPRERGQIIYYIARSKGL.

The residue at position 452 (S452) is a Phosphoserine.

The protein belongs to the MEC3 family. In terms of assembly, component of the checkpoint clamp complex composed of DDC1, MEC3 and RAD17. The interaction with MEC3 is performed in a RAD17-dependent manner. The checkpoint clamp complex loads onto DNA. Interacts with the DNA polymerase zeta subunit REV7. Also forms a heterotrimer with 2 RAD17 subunits. Interacts with SET1.

The protein resides in the nucleus. Functionally, component of the checkpoint clamp complex involved in the surveillance mechanism that allows the DNA repair pathways to act to restore the integrity of the DNA prior to DNA synthesis or separation of the replicated chromosomes. Associates with sites of DNA damage and modulates the MEC1 signaling pathway and the activation of RAD53 in response to DNA damage at phase G1. The complex also physically regulates DNA polymerase zeta-dependent mutagenesis by controlling the access of polymerase zeta to damaged DNA. This Saccharomyces cerevisiae (strain ATCC 204508 / S288c) (Baker's yeast) protein is DNA damage checkpoint control protein MEC3 (MEC3).